The following is a 137-amino-acid chain: Putative pre-16S rRNA nuclease (137 aa).

It belongs to the YqgF nuclease family.

It localises to the cytoplasm. Functionally, could be a nuclease involved in processing of the 5'-end of pre-16S rRNA. The protein is Putative pre-16S rRNA nuclease of Actinobacillus pleuropneumoniae serotype 7 (strain AP76).